We begin with the raw amino-acid sequence, 59 residues long: Small ribosomal subunit protein eS17 (59 aa).

It belongs to the eukaryotic ribosomal protein eS17 family.

The chain is Small ribosomal subunit protein eS17 from Halobacterium salinarum (strain ATCC 29341 / DSM 671 / R1).